A 1465-amino-acid chain; its full sequence is Ankyrin and armadillo repeat-containing protein (1465 aa).

Residues 313–329 (MGYLKLICFLIPFLLSL) form a helical membrane-spanning segment. 5 ANK repeats span residues 532–561 (AGYAIFHHAALHNRVSVICQLWSANFNVNQ), 582–611 (NGPTPLHLAAQACSLEATICLLCFKADYTL), 615–644 (RGWMPIHFAAFYDNICILIALCRKDPSLLE), 651–680 (NQCTPLLLAATSGALDTIQYLFSLGANWRK), and 684–714 (KGNNIIHLSVLAFHTEVLKYIIELNIPELPV). ARM repeat units lie at residues 745–784 (DRYWQCILDAGTIPALVNLLKSPQIKLQYKTVGLLSNIST), 786–825 (VSIVHAIVEAGGIPAVINLLTSDEPELHSRCAIILYDVAK), 827–865 (ENKDVIAKYSGIPALINLLSLNKESVLVNVMNCIRVLCM), 868–907 (ESNQQSMKDNNGIQYLIQFLSSDSDVLKALSSATIAEVAR), 910–949 (KEVQDAIAKEGAIPPLVTLFKGKQLSVQVKGAMAVESLAN), and 1085–1125 (PMSQ…CIVL). Residues 1431–1465 (KLGKDEQKANPDPPAFLNKLGKDEQNANPDPAESQ) form a disordered region.

The protein localises to the membrane. The chain is Ankyrin and armadillo repeat-containing protein (Ankar) from Mus musculus (Mouse).